A 245-amino-acid polypeptide reads, in one-letter code: Uridylate kinase (245 aa).

An ATP-binding site is contributed by 12–15 (KLSG). The segment at 20 to 25 (GEKGVG) is involved in allosteric activation by GTP. Glycine 54 serves as a coordination point for UMP. Residues glycine 55 and arginine 59 each coordinate ATP. UMP-binding positions include aspartate 74 and 135 to 142 (VGSPYFST). ATP-binding residues include asparagine 163, tyrosine 169, and aspartate 172.

This sequence belongs to the UMP kinase family. In terms of assembly, homohexamer.

Its subcellular location is the cytoplasm. The enzyme catalyses UMP + ATP = UDP + ADP. Its pathway is pyrimidine metabolism; CTP biosynthesis via de novo pathway; UDP from UMP (UMPK route): step 1/1. Allosterically activated by GTP. Inhibited by UTP. Functionally, catalyzes the reversible phosphorylation of UMP to UDP. The sequence is that of Uridylate kinase from Streptococcus mutans serotype c (strain ATCC 700610 / UA159).